Reading from the N-terminus, the 331-residue chain is Phosphoribosylformylglycinamidine cyclo-ligase (331 aa).

This sequence belongs to the AIR synthase family.

Its subcellular location is the cytoplasm. The catalysed reaction is 2-formamido-N(1)-(5-O-phospho-beta-D-ribosyl)acetamidine + ATP = 5-amino-1-(5-phospho-beta-D-ribosyl)imidazole + ADP + phosphate + H(+). Its pathway is purine metabolism; IMP biosynthesis via de novo pathway; 5-amino-1-(5-phospho-D-ribosyl)imidazole from N(2)-formyl-N(1)-(5-phospho-D-ribosyl)glycinamide: step 2/2. The sequence is that of Phosphoribosylformylglycinamidine cyclo-ligase from Clostridium novyi (strain NT).